Consider the following 273-residue polypeptide: Putative peptidyl-prolyl cis-trans isomerase Cbf2 (273 aa).

Positions 1-21 (MKKFSLVAAALIAGVALNVNA) are cleaved as a signal peptide. The PpiC domain maps to 131–228 (PARVQAKHIL…FGYHVILKEN (98 aa)).

It catalyses the reaction [protein]-peptidylproline (omega=180) = [protein]-peptidylproline (omega=0). In Campylobacter jejuni subsp. jejuni serotype O:23/36 (strain 81-176), this protein is Putative peptidyl-prolyl cis-trans isomerase Cbf2 (cbf2).